The following is a 250-amino-acid chain: Aquaporin TIP1-1 (250 aa).

Transmembrane regions (helical) follow at residues 24-44 (FAEF…GMAF) and 56-76 (AGLI…VSVG). The NPA 1 motif lies at 85–87 (NPA). Helical transmembrane passes span 104 to 126 (LLYW…FSTG), 143 to 163 (ALVL…ATAV), and 172 to 192 (TIAP…GGAF). The NPA 2 motif lies at 198 to 200 (NPA). Residues 218-238 (YWVGPLIGGGLAGVIYELLFI) form a helical membrane-spanning segment.

It belongs to the MIP/aquaporin (TC 1.A.8) family. TIP (TC 1.A.8.10) subfamily. As to expression, expressed in roots, shoots, leaves, tassels, ears and embryos. Expressed in meristems and zones of cell enlargement: tips of primary and lateral roots, leaf primordia, and male and female inflorescence meristems. Highly expressed in the root epidermis and endodermis, parenchyma cells surrounding mature xylem vessels in the root and the stem, phloem companion cells and a ring of cells around the phloem strand in the stem and the leaf sheath, and the basal endosperm transfer cells in developing kernels.

It is found in the vacuole membrane. Its function is as follows. Water channel required to facilitate the transport of water across cell membrane. May support the rapid influx of water into vacuoles during cell expansion, permit osmotic equilibration between the cytosol and the vacuolar content and rapid transcellular water flow through living cells. Its function is impaired by Hg(2+). The sequence is that of Aquaporin TIP1-1 (TIP1-1) from Zea mays (Maize).